We begin with the raw amino-acid sequence, 1312 residues long: DNA repair protein RAD50 (1312 aa).

Residues Arg13, Asn38, Gly39, Gly41, Lys42, Thr43, Thr44, Val67, Asp69, and Gln159 each contribute to the ATP site. Thr43 serves as a coordination point for Mg(2+). Gln159 lines the Mg(2+) pocket. Coiled-coil stretches lie at residues Thr228 to Arg359, Arg401 to Asn598, and Ser635 to Leu673. Position 635 is a phosphoserine; by ATM (Ser635). The 100-residue stretch at Ser635–Pro734 folds into the Zinc-hook domain. Residues Cys681 and Cys684 each contribute to the Zn(2+) site. Thr690 bears the Phosphothreonine mark. Coiled-coil stretches lie at residues Arg706–Pro734 and Leu789–Lys1079. Lys959 bears the N6-acetyllysine mark.

This sequence belongs to the SMC family. RAD50 subfamily. In terms of assembly, component of the MRN complex composed of two heterodimers RAD50 and MRE11 associated with a single NBN. The MRN complexes dimerize on DNA to form joined MRN-MRN oligomers required for DNA double-strand break repair. As part of the MRN complex, interacts with MCM8 and MCM9; the interaction recruits the complex to DNA repair sites. Component of the BASC complex, at least composed of BRCA1, MSH2, MSH6, MLH1, ATM, BLM, RAD50, MRE11 and NBN. Found in a complex with TERF2. Interacts with RINT1. Interacts with BRCA1 via its N-terminal domain. Interacts with DCLRE1C/Artemis. Interacts with MRNIP. Interacts with CYREN (via XLF motif). Interacts with C1QBP and MRE11; interaction takes place in absence of DNA damage to form the MRC (MRE11-RAD50-C1QBP) complex that inhibits the activity of MRE11. (Microbial infection) Interacts with herpes simplex virus 1 protein UL12. Zn(2+) is required as a cofactor. In terms of processing, phosphorylation at Ser-635 by ATM in response to DNA damage is required for double-strand break (DSB) repair. As to expression, expressed at very low level in most tissues, except in testis where it is expressed at higher level. Expressed in fibroblasts.

The protein resides in the nucleus. The protein localises to the chromosome. It is found in the telomere. It carries out the reaction ATP + H2O = ADP + phosphate + H(+). Component of the MRN complex, which plays a central role in double-strand break (DSB) repair, DNA recombination, maintenance of telomere integrity and meiosis. The MRN complex is involved in the repair of DNA double-strand breaks (DSBs) via homologous recombination (HR), an error-free mechanism which primarily occurs during S and G2 phases. The complex (1) mediates the end resection of damaged DNA, which generates proper single-stranded DNA, a key initial steps in HR, and is (2) required for the recruitment of other repair factors and efficient activation of ATM and ATR upon DNA damage. The MRN complex possesses single-strand endonuclease activity and double-strand-specific 3'-5' exonuclease activity, which are provided by MRE11, to initiate end resection, which is required for single-strand invasion and recombination. Within the complex, RAD50 is both required to bind DNA ends and hold them in close proximity and regulate the activity of MRE11. RAD50 provides an ATP-dependent control of MRE11 by positioning DNA ends into the MRE11 active site: ATP-binding induces a large structural change from an open form with accessible MRE11 nuclease sites into a closed form. The MRN complex is also required for DNA damage signaling via activation of the ATM and ATR kinases: the nuclease activity of MRE11 is not required to activate ATM and ATR. The MRN complex is also required for the processing of R-loops. In telomeres the MRN complex may modulate t-loop formation. This is DNA repair protein RAD50 from Homo sapiens (Human).